We begin with the raw amino-acid sequence, 216 residues long: Probable GTP-binding protein EngB (216 aa).

The region spanning 21-192 (DAPQIALAGR…WRELRALAAG (172 aa)) is the EngB-type G domain. GTP contacts are provided by residues 29–36 (GRSNVGKS), 56–60 (GKTRS), 75–78 (DLPG), 142–145 (TKGD), and 170–173 (VTAS). Residues serine 36 and threonine 58 each coordinate Mg(2+). The disordered stretch occupies residues 195-216 (SADDEAEDAPSDTIDAIDDVTA). The segment covering 196-216 (ADDEAEDAPSDTIDAIDDVTA) has biased composition (acidic residues).

Belongs to the TRAFAC class TrmE-Era-EngA-EngB-Septin-like GTPase superfamily. EngB GTPase family. Mg(2+) is required as a cofactor.

Its function is as follows. Necessary for normal cell division and for the maintenance of normal septation. The sequence is that of Probable GTP-binding protein EngB from Nitratidesulfovibrio vulgaris (strain DP4) (Desulfovibrio vulgaris).